Reading from the N-terminus, the 400-residue chain is Large envelope protein (400 aa).

At M1 the chain carries N-acetylmethionine. G2 is lipidated: N-myristoyl glycine; by host. Residues G2–A119 form a pre-S1 region. Residues G2–N174 form a pre-S region. Over G2–G181 the chain is Virion surface; in external conformation. At G2 to R253 the chain is on the intravirion; in internal conformation side. N-linked (GlcNAc...) asparagine glycosylation is present at P4. A disordered region spans residues P70 to T115. Positions P79 to S88 are enriched in polar residues. Positions M120–N174 are pre-S2. The chain crosses the membrane as a helical span at residues L182 to I202. Residues P203–R253 are Intravirion; in external conformation-facing. The helical transmembrane segment at F254–Y274 threads the bilayer. The Virion surface portion of the chain corresponds to Q275–S348. N-linked (GlcNAc...) asparagine; by host glycosylation is present at N320. A helical transmembrane segment spans residues L349–I369. At W370–W375 the chain is on the intravirion side. A helical membrane pass occupies residues G376 to A398. Residues S399–I400 are Virion surface-facing.

The protein belongs to the orthohepadnavirus major surface antigen family. In terms of assembly, in its internal form (Li-HBsAg), interacts with the capsid protein and with the isoform S. Interacts with host chaperone CANX. As to quaternary structure, associates with host chaperone CANX through its pre-S2 N glycan; this association may be essential for isoform M proper secretion. Interacts with isoform L. Interacts with the antigens of satellite virus HDV (HDVAgs); this interaction is required for encapsidation of HDV genomic RNA. In terms of processing, isoform M is N-terminally acetylated by host at a ratio of 90%, and N-glycosylated by host at the pre-S2 region. Myristoylated.

Its subcellular location is the virion membrane. Functionally, the large envelope protein exists in two topological conformations, one which is termed 'external' or Le-HBsAg and the other 'internal' or Li-HBsAg. In its external conformation the protein attaches the virus to cell receptors and thereby initiating infection. This interaction determines the species specificity and liver tropism. This attachment induces virion internalization predominantly through caveolin-mediated endocytosis. The large envelope protein also assures fusion between virion membrane and endosomal membrane. In its internal conformation the protein plays a role in virion morphogenesis and mediates the contact with the nucleocapsid like a matrix protein. Its function is as follows. The middle envelope protein plays an important role in the budding of the virion. It is involved in the induction of budding in a nucleocapsid independent way. In this process the majority of envelope proteins bud to form subviral lipoprotein particles of 22 nm of diameter that do not contain a nucleocapsid. In Hepatitis B virus genotype H (isolate United States/LAS2523/2002) (HBV-H), this protein is Large envelope protein.